Consider the following 104-residue polypeptide: Iron-sulfur cluster assembly protein CyaY (104 aa).

The protein belongs to the frataxin family.

Functionally, involved in iron-sulfur (Fe-S) cluster assembly. May act as a regulator of Fe-S biogenesis. The protein is Iron-sulfur cluster assembly protein CyaY of Aeromonas salmonicida (strain A449).